The chain runs to 353 residues: Phospho-N-acetylmuramoyl-pentapeptide-transferase (353 aa).

The next 10 membrane-spanning stretches (helical) occupy residues leucine 24–alanine 44, threonine 66–alanine 86, leucine 88–phenylalanine 108, phenylalanine 129–aspartate 149, proline 160–threonine 180, glycine 192–alanine 212, valine 229–tyrosine 249, valine 256–valine 276, isoleucine 281–valine 301, and lysine 330–leucine 350.

This sequence belongs to the glycosyltransferase 4 family. MraY subfamily. Mg(2+) is required as a cofactor.

The protein localises to the cell inner membrane. It carries out the reaction UDP-N-acetyl-alpha-D-muramoyl-L-alanyl-gamma-D-glutamyl-meso-2,6-diaminopimeloyl-D-alanyl-D-alanine + di-trans,octa-cis-undecaprenyl phosphate = di-trans,octa-cis-undecaprenyl diphospho-N-acetyl-alpha-D-muramoyl-L-alanyl-D-glutamyl-meso-2,6-diaminopimeloyl-D-alanyl-D-alanine + UMP. It participates in cell wall biogenesis; peptidoglycan biosynthesis. In terms of biological role, catalyzes the initial step of the lipid cycle reactions in the biosynthesis of the cell wall peptidoglycan: transfers peptidoglycan precursor phospho-MurNAc-pentapeptide from UDP-MurNAc-pentapeptide onto the lipid carrier undecaprenyl phosphate, yielding undecaprenyl-pyrophosphoryl-MurNAc-pentapeptide, known as lipid I. This chain is Phospho-N-acetylmuramoyl-pentapeptide-transferase, found in Helicobacter pylori (strain HPAG1).